The chain runs to 430 residues: Dihydroorotase (430 aa).

Positions 60 and 62 each coordinate Zn(2+). Substrate-binding positions include 62 to 64 (HFR) and Asn94. 3 residues coordinate Zn(2+): Asp151, His178, and His231. Asn277 contacts substrate. Asp304 contacts Zn(2+). The active site involves Asp304. Substrate is bound by residues His308 and 322 to 323 (FG).

This sequence belongs to the metallo-dependent hydrolases superfamily. DHOase family. Class I DHOase subfamily. It depends on Zn(2+) as a cofactor.

The enzyme catalyses (S)-dihydroorotate + H2O = N-carbamoyl-L-aspartate + H(+). Its pathway is pyrimidine metabolism; UMP biosynthesis via de novo pathway; (S)-dihydroorotate from bicarbonate: step 3/3. Catalyzes the reversible cyclization of carbamoyl aspartate to dihydroorotate. The polypeptide is Dihydroorotase (Carboxydothermus hydrogenoformans (strain ATCC BAA-161 / DSM 6008 / Z-2901)).